Reading from the N-terminus, the 339-residue chain is DNA-directed RNA polymerase subunit alpha (339 aa).

The alpha N-terminal domain (alpha-NTD) stretch occupies residues 1-233; the sequence is MVREEVAGST…DLFLPFLHAE (233 aa). Residues 264–339 are alpha C-terminal domain (alpha-CTD); that stretch reads KKGIPLNCIF…IDLLKNKLSF (76 aa).

It belongs to the RNA polymerase alpha chain family. In plastids the minimal PEP RNA polymerase catalytic core is composed of four subunits: alpha, beta, beta', and beta''. When a (nuclear-encoded) sigma factor is associated with the core the holoenzyme is formed, which can initiate transcription.

The protein localises to the plastid. Its subcellular location is the chloroplast. It carries out the reaction RNA(n) + a ribonucleoside 5'-triphosphate = RNA(n+1) + diphosphate. In terms of biological role, DNA-dependent RNA polymerase catalyzes the transcription of DNA into RNA using the four ribonucleoside triphosphates as substrates. This chain is DNA-directed RNA polymerase subunit alpha, found in Psathyrostachys stoloniformis.